The primary structure comprises 436 residues: Histidinol dehydrogenase (436 aa).

Residues Tyr-135, Gln-197, and Asn-220 each coordinate NAD(+). Residues Thr-243, Gln-265, and His-268 each coordinate substrate. Zn(2+)-binding residues include Gln-265 and His-268. Residues Glu-334 and His-335 each act as proton acceptor in the active site. 4 residues coordinate substrate: His-335, Asp-368, Glu-422, and His-427. Position 368 (Asp-368) interacts with Zn(2+). His-427 serves as a coordination point for Zn(2+).

It belongs to the histidinol dehydrogenase family. The cofactor is Zn(2+).

It catalyses the reaction L-histidinol + 2 NAD(+) + H2O = L-histidine + 2 NADH + 3 H(+). The protein operates within amino-acid biosynthesis; L-histidine biosynthesis; L-histidine from 5-phospho-alpha-D-ribose 1-diphosphate: step 9/9. Its function is as follows. Catalyzes the sequential NAD-dependent oxidations of L-histidinol to L-histidinaldehyde and then to L-histidine. This Deinococcus radiodurans (strain ATCC 13939 / DSM 20539 / JCM 16871 / CCUG 27074 / LMG 4051 / NBRC 15346 / NCIMB 9279 / VKM B-1422 / R1) protein is Histidinol dehydrogenase.